Consider the following 114-residue polypeptide: Iron-sulfur cluster insertion protein ErpA (114 aa).

Residues Cys42, Cys106, and Cys108 each contribute to the iron-sulfur cluster site.

This sequence belongs to the HesB/IscA family. In terms of assembly, homodimer. It depends on iron-sulfur cluster as a cofactor.

Its function is as follows. Required for insertion of 4Fe-4S clusters for at least IspG. The chain is Iron-sulfur cluster insertion protein ErpA from Wigglesworthia glossinidia brevipalpis.